Consider the following 425-residue polypeptide: Enolase (425 aa).

Gln163 provides a ligand contact to (2R)-2-phosphoglycerate. Catalysis depends on Glu205, which acts as the Proton donor. The Mg(2+) site is built by Asp242, Glu285, and Asp312. (2R)-2-phosphoglycerate-binding residues include Lys337, Arg366, Ser367, and Lys388. The active-site Proton acceptor is Lys337.

Belongs to the enolase family. Mg(2+) is required as a cofactor.

It localises to the cytoplasm. The protein localises to the secreted. The protein resides in the cell surface. It catalyses the reaction (2R)-2-phosphoglycerate = phosphoenolpyruvate + H2O. It functions in the pathway carbohydrate degradation; glycolysis; pyruvate from D-glyceraldehyde 3-phosphate: step 4/5. Its function is as follows. Catalyzes the reversible conversion of 2-phosphoglycerate (2-PG) into phosphoenolpyruvate (PEP). It is essential for the degradation of carbohydrates via glycolysis. This is Enolase from Cereibacter sphaeroides (strain ATCC 17025 / ATH 2.4.3) (Rhodobacter sphaeroides).